A 550-amino-acid polypeptide reads, in one-letter code: Transcriptional repressor RHIT (550 aa).

Disordered stretches follow at residues 1 to 67 (MSAD…ETRA), 174 to 200 (VQGK…VVEV), and 216 to 296 (KSFK…EGLA). 3 stretches are compositionally biased toward basic and acidic residues: residues 11–22 (AQDKERARETPG), 45–58 (ESPH…EPHP), and 187–200 (LGHE…VVEV). In terms of domain architecture, KRAB spans 124 to 193 (VTFEDMALYL…SRQLGHEEEE (70 aa)). A Glycyl lysine isopeptide (Lys-Gly) (interchain with G-Cter in SUMO2) cross-link involves residue Lys216. A compositionally biased stretch (basic and acidic residues) spans 267–281 (DLPKTQEGHFPEQPR). Ser290 bears the Phosphoserine mark. 8 consecutive C2H2-type zinc fingers follow at residues 306 to 328 (YKCE…RRTH), 334 to 356 (YACT…QIIH), 362 to 384 (YTCP…QRIH), 390 to 412 (YVCD…QGTH), 418 to 440 (HKCP…QRTH), 446 to 468 (YPCP…NRTH), 474 to 496 (YHCL…QRTH), and 502 to 524 (YSCP…EKIH).

Belongs to the krueppel C2H2-type zinc-finger protein family.

Its subcellular location is the nucleus. Transcriptional repressor involved in regulating MPV17L expression. By regulating MPV17L expression, contributes to the regulation of genes involved in H(2)O(2) metabolism and the mitochondrial apoptotic cascade. This Bos taurus (Bovine) protein is Transcriptional repressor RHIT (ZNF205).